Consider the following 390-residue polypeptide: LIM/homeobox protein Lhx4 (390 aa).

LIM zinc-binding domains lie at 28–87 (PQCA…RFGT) and 88–150 (KCTA…AKQN). Residues 157–216 (AKRPRTTITAKQLETLKNAYKNSPKPARHVREQLSSETGLDMRVVQVWFQNRRAKEKRLK) constitute a DNA-binding region (homeobox). The segment at 161-181 (RTTITAKQLETLKNAYKNSPK) is interaction with DNA. Positions 199 to 211 (RVVQVWFQNRRAK) are interaction with 5-mCpG DNA. Disordered stretches follow at residues 231 to 253 (VKRS…GVSD) and 355 to 390 (MAGG…HPPF).

In terms of tissue distribution, transient expression in ventrolateral regions of the developing neural tube and hindbrain.

It localises to the nucleus. Functionally, may play a critical role in the development of respiratory control mechanisms and in the normal growth and maturation of the lung. Binds preferentially to methylated DNA. The protein is LIM/homeobox protein Lhx4 (Lhx4) of Mus musculus (Mouse).